The sequence spans 130 residues: MIGDWNNGTGRRKSSVARVFLKKGSGKITVNGKDIQEYFGRETSIMIAKQPLALTSNLEAFDIQVNVHGGGESGQAGATRHGITRALIDYDAALKPVLSQAGFVTRDAREVERKKVGLRSARRAKQFSKR.

It belongs to the universal ribosomal protein uS9 family.

This Delftia acidovorans (strain DSM 14801 / SPH-1) protein is Small ribosomal subunit protein uS9.